Reading from the N-terminus, the 904-residue chain is Putative pentatricopeptide repeat-containing protein At1g19290 (904 aa).

PPR repeat units follow at residues 154 to 188, 189 to 223, 224 to 254, 260 to 294, 295 to 329, 330 to 364, 365 to 399, 400 to 434, 435 to 469, 470 to 504, 505 to 539, 540 to 574, 575 to 609, 610 to 644, 645 to 679, 718 to 753, 754 to 788, 789 to 823, and 824 to 858; these read SPTVFDMILKVYAEKGLVKNALHVFDNMGNYGRIP, SLLSCNSLLSNLVRKGENFVALHVYDQMISFEVSP, DVFTCSIVVNAYCRSGNVDKAMVFAKETESS, NVVTYNSLINGYAMIGDVEGMTRVLRLMSERGVSR, NVVTYTSLIKGYCKKGLMEEAEHVFELLKEKKLVA, DQHMYGVLMDGYCRTGQIRDAVRVHDNMIEIGVRT, NTTICNSLINGYCKSGQLVEAEQIFSRMNDWSLKP, DHHTYNTLVDGYCRAGYVDEALKLCDQMCQKEVVP, TVMTYNILLKGYSRIGAFHDVLSLWKMMLKRGVNA, DEISCSTLLEALFKLGDFNEAMKLWENVLARGLLT, DTITLNVMISGLCKMEKVNEAKEILDNVNIFRCKP, AVQTYQALSHGYYKVGNLKEAFAVKEYMERKGIFP, TIEMYNTLISGAFKYRHLNKVADLVIELRARGLTP, TVATYGALITGWCNIGMIDKAYATCFEMIEKGITL, NVNICSKIANSLFRLDKIDEACLLLQKIVDFDLLL, NNIVYNVAIAGLCKAGKLEDARKLFSDLLSSDRFIP, DEYTYTILIHGCAIAGDINKAFTLRDEMALKGIIP, NIVTYNALIKGLCKLGNVDRAQRLLHKLPQKGITP, and NAITYNTLIDGLVKSGNVAEAMRLKEKMIEKGLVR.

Belongs to the PPR family. P subfamily.

The sequence is that of Putative pentatricopeptide repeat-containing protein At1g19290 from Arabidopsis thaliana (Mouse-ear cress).